Reading from the N-terminus, the 89-residue chain is Probable Fe(2+)-trafficking protein (89 aa).

The protein belongs to the Fe(2+)-trafficking protein family.

Its function is as follows. Could be a mediator in iron transactions between iron acquisition and iron-requiring processes, such as synthesis and/or repair of Fe-S clusters in biosynthetic enzymes. The protein is Probable Fe(2+)-trafficking protein of Hahella chejuensis (strain KCTC 2396).